Consider the following 301-residue polypeptide: MAEITAALVKELREKTGAGMMDAKKALVENNGDQAAAIEWLRAKGLSKAAKKSDRAAAEGLVAVKLSDDGKSGAIVELNAETDFVARNEIFQKSLDGIAVAALKADGTVEAVSAAASPDGEGSVDDLIKRMIATIGENMTLRRVAKLSATGRVAAYTHNAVVPGMGKVGVLVALDGSGDLEDAGRKVAMHIAATSPAAATTEELDPALVESEKRVLTEQARESGKPDAVIEKMIVGRMQKFYKEVVLAEQPFIMDPDKTVGEFLKEQGATLKGFVHYKLGEGVEKAADNFADEVAALTKGA.

Residues 82-85 form an involved in Mg(2+) ion dislocation from EF-Tu region; the sequence is TDFV.

This sequence belongs to the EF-Ts family.

The protein localises to the cytoplasm. Its function is as follows. Associates with the EF-Tu.GDP complex and induces the exchange of GDP to GTP. It remains bound to the aminoacyl-tRNA.EF-Tu.GTP complex up to the GTP hydrolysis stage on the ribosome. This is Elongation factor Ts from Hyphomonas neptunium (strain ATCC 15444).